The chain runs to 366 residues: uncharacterized protein (366 aa).

Glu-139 functions as the Proton donor in the catalytic mechanism. Residue Glu-249 is the Nucleophile of the active site.

The protein belongs to the glycosyl hydrolase 53 family.

This is an uncharacterized protein from Niallia circulans (Bacillus circulans).